A 180-amino-acid chain; its full sequence is Ribulose bisphosphate carboxylase small subunit, chloroplastic (180 aa).

Residues 1-56 (MALISSAAVTTVNRASSAQANLVAPFTGLKSSAGFPVTKKTNNDITSIASNGGRVN) constitute a chloroplast transit peptide.

The protein belongs to the RuBisCO small chain family. In terms of assembly, heterohexadecamer of 8 large and 8 small subunits.

The protein resides in the plastid. The protein localises to the chloroplast. Functionally, ruBisCO catalyzes two reactions: the carboxylation of D-ribulose 1,5-bisphosphate, the primary event in carbon dioxide fixation, as well as the oxidative fragmentation of the pentose substrate. Both reactions occur simultaneously and in competition at the same active site. Although the small subunit is not catalytic it is essential for maximal activity. The sequence is that of Ribulose bisphosphate carboxylase small subunit, chloroplastic from Medicago sativa (Alfalfa).